Reading from the N-terminus, the 285-residue chain is Ribosomal RNA small subunit methyltransferase I (285 aa).

The protein belongs to the methyltransferase superfamily. RsmI family.

Its subcellular location is the cytoplasm. It catalyses the reaction cytidine(1402) in 16S rRNA + S-adenosyl-L-methionine = 2'-O-methylcytidine(1402) in 16S rRNA + S-adenosyl-L-homocysteine + H(+). In terms of biological role, catalyzes the 2'-O-methylation of the ribose of cytidine 1402 (C1402) in 16S rRNA. The protein is Ribosomal RNA small subunit methyltransferase I of Mycobacterium tuberculosis (strain ATCC 25618 / H37Rv).